We begin with the raw amino-acid sequence, 219 residues long: MASASEPPASPRDAADQNFDYMFKLLLIGNSSVGKTSFLFRYADDSFTPAFVSTVGIDFKVKTVYRHDKRIKLQIWDTAGQERYRTITTAYYRGAMGFLLMYDIANQESFTAVQDWATQIKTYSWDNAQVILVGNKCDLEDERVVPAEDGRRLADDLGFEFFEASAKENINVKQVFERLVDIICDKMNESLEPSSSPGSNGKGPALGDTPPPQPSSCSC.

Alanine 2 is modified (N-acetylalanine). 29–37 provides a ligand contact to GDP; the sequence is GNSSVGKTS. The GTP site is built by serine 31, serine 32, valine 33, glycine 34, lysine 35, threonine 36, serine 37, proline 49, and serine 53. Threonine 36 contacts Mg(2+). The Switch 1 signature appears at 49 to 58; the sequence is PAFVSTVGID. Positions 54 and 77 each coordinate Mg(2+). Glycine 80 provides a ligand contact to GTP. The Switch 2 signature appears at 80-96; that stretch reads GQERYRTITTAYYRGAM. Threonine 86 is subject to Phosphothreonine; by LRRK2. Residues asparagine 135, lysine 136, aspartate 138, alanine 166, and lysine 167 each contribute to the GTP site. Residues 135-138 and 165-167 contribute to the GDP site; these read NKCD and SAK. Serine 190 is subject to Phosphoserine. The segment at 190 to 219 is disordered; sequence SLEPSSSPGSNGKGPALGDTPPPQPSSCSC. The span at 193 to 203 shows a compositional bias: low complexity; the sequence is PSSSPGSNGKG. A compositionally biased stretch (pro residues) spans 209-219; the sequence is TPPPQPSSCSC. S-geranylgeranyl cysteine attachment occurs at residues cysteine 217 and cysteine 219. Position 219 is a cysteine methyl ester (cysteine 219).

This sequence belongs to the small GTPase superfamily. Rab family. In terms of assembly, interacts with RIMS1, RIMS2, RPH3A, RPH3AL and RAB3IP. The GTP-bound form interacts with REP15. Interacts with CHM and CHML; phosphorylation at Thr-86 disrupts these interactions. Interacts with MADD (via uDENN domain); the GTP-bound form is preferred for interaction. It depends on Mg(2+) as a cofactor. Post-translationally, phosphorylation of Thr-86 in the switch II region by LRRK2 prevents the association of RAB regulatory proteins, including CHM and CHML. In terms of tissue distribution, predominantly expressed in the adipocyte tissue, but is also expressed in several other organs including skin, spleen, heart and lung.

It localises to the cell membrane. It catalyses the reaction GTP + H2O = GDP + phosphate + H(+). Its activity is regulated as follows. Regulated by guanine nucleotide exchange factors (GEFs) which promote the exchange of bound GDP for free GTP. Regulated by GTPase activating proteins (GAPs) which increase the GTP hydrolysis activity. Inhibited by GDP dissociation inhibitors (GDIs) which prevent Rab-GDP dissociation. Its function is as follows. The small GTPases Rab are key regulators of intracellular membrane trafficking, from the formation of transport vesicles to their fusion with membranes. Rabs cycle between an inactive GDP-bound form and an active GTP-bound form that is able to recruit to membranes different sets of downstream effectors directly responsible for vesicle formation, movement, tethering and fusion. RAB3D may be involved in the insulin-induced exocytosis of GLUT4-containing vesicles in adipocytes. This chain is Ras-related protein Rab-3D, found in Mus musculus (Mouse).